The chain runs to 95 residues: Cobalt transport protein CbiN (95 aa).

2 helical membrane passes run I7–G27 and L67–Y87.

It belongs to the CbiN family. As to quaternary structure, forms an energy-coupling factor (ECF) transporter complex composed of an ATP-binding protein (A component, CbiO), a transmembrane protein (T component, CbiQ) and 2 possible substrate-capture proteins (S components, CbiM and CbiN) of unknown stoichimetry.

The protein resides in the cell membrane. It functions in the pathway cofactor biosynthesis; adenosylcobalamin biosynthesis. Functionally, part of the energy-coupling factor (ECF) transporter complex CbiMNOQ involved in cobalt import. The chain is Cobalt transport protein CbiN from Methanothermobacter marburgensis (strain ATCC BAA-927 / DSM 2133 / JCM 14651 / NBRC 100331 / OCM 82 / Marburg) (Methanobacterium thermoautotrophicum).